A 166-amino-acid chain; its full sequence is Interferon gamma (166 aa).

A signal peptide spans 1–23 (MKYTSYFLALQLCLLLGFSGSYG). Glutamine 24 bears the Pyrrolidone carboxylic acid mark. N-linked (GlcNAc...) asparagine glycans are attached at residues asparagine 39 and asparagine 106.

This sequence belongs to the type II (or gamma) interferon family. In terms of assembly, homodimer. Interacts with IFNGR1 (via extracellular domain); this interaction promotes IFNGR1 dimerization. As to expression, released primarily from activated T lymphocytes.

The protein resides in the secreted. Its function is as follows. Type II interferon produced by immune cells such as T-cells and NK cells that plays crucial roles in antimicrobial, antiviral, and antitumor responses by activating effector immune cells and enhancing antigen presentation. Primarily signals through the JAK-STAT pathway after interaction with its receptor IFNGR1 to affect gene regulation. Upon IFNG binding, IFNGR1 intracellular domain opens out to allow association of downstream signaling components JAK2, JAK1 and STAT1, leading to STAT1 activation, nuclear translocation and transcription of IFNG-regulated genes. Many of the induced genes are transcription factors such as IRF1 that are able to further drive regulation of a next wave of transcription. Plays a role in class I antigen presentation pathway by inducing a replacement of catalytic proteasome subunits with immunoproteasome subunits. In turn, increases the quantity, quality, and repertoire of peptides for class I MHC loading. Increases the efficiency of peptide generation also by inducing the expression of activator PA28 that associates with the proteasome and alters its proteolytic cleavage preference. Up-regulates as well MHC II complexes on the cell surface by promoting expression of several key molecules such as cathepsins B/CTSB, H/CTSH, and L/CTSL. Participates in the regulation of hematopoietic stem cells during development and under homeostatic conditions by affecting their development, quiescence, and differentiation. In Moschus berezovskii (Chinese forest musk deer), this protein is Interferon gamma (IFNG).